Reading from the N-terminus, the 114-residue chain is Protein LLP homolog (114 aa).

Basic residues-rich tracts occupy residues 1–21 (MAKSLRSKWKRKMRAEKRKKN) and 91–108 (QRKKLKAQRLKGKKKSKL). Disordered regions lie at residues 1 to 23 (MAKSLRSKWKRKMRAEKRKKNAP) and 91 to 114 (QRKKLKAQRLKGKKKSKLPKGLAW).

The protein belongs to the learning-associated protein family.

Its subcellular location is the nucleus. The protein localises to the nucleolus. It is found in the chromosome. Functionally, regulates dendritic and spine growth and synaptic transmission. This is Protein LLP homolog (LLPH) from Gallus gallus (Chicken).